We begin with the raw amino-acid sequence, 323 residues long: E3 ubiquitin-protein ligase SIRP1 (323 aa).

Residues 199 to 240 form an RING-type; atypical zinc finger; it reads CSVCLDDLEVGSQAKQMPCEHKFHSSCILPWLELHSSCPVCR. Disordered stretches follow at residues 248-280 and 296-323; these read TKDL…ESSN and REAQ…AGHS. Over residues 259–269 the composition is skewed to basic and acidic residues; sequence RVEDSHEEVRA.

It is found in the cytoplasm. It carries out the reaction S-ubiquitinyl-[E2 ubiquitin-conjugating enzyme]-L-cysteine + [acceptor protein]-L-lysine = [E2 ubiquitin-conjugating enzyme]-L-cysteine + N(6)-ubiquitinyl-[acceptor protein]-L-lysine.. The protein operates within protein modification; protein ubiquitination. Functionally, possesses E3 ubiqutin-protein ligase activity in vitro. Acts as negative regulator of salinity stress tolerance mediated by the ubiquitin-proteasome degradation pathway. The chain is E3 ubiquitin-protein ligase SIRP1 from Oryza sativa subsp. japonica (Rice).